A 315-amino-acid polypeptide reads, in one-letter code: 4-hydroxy-3-methylbut-2-enyl diphosphate reductase (315 aa).

Residue Cys12 participates in [4Fe-4S] cluster binding. (2E)-4-hydroxy-3-methylbut-2-enyl diphosphate-binding residues include His41 and His74. The dimethylallyl diphosphate site is built by His41 and His74. Positions 41 and 74 each coordinate isopentenyl diphosphate. A [4Fe-4S] cluster-binding site is contributed by Cys96. His124 serves as a coordination point for (2E)-4-hydroxy-3-methylbut-2-enyl diphosphate. Residue His124 participates in dimethylallyl diphosphate binding. Residue His124 participates in isopentenyl diphosphate binding. Glu126 acts as the Proton donor in catalysis. Thr168 lines the (2E)-4-hydroxy-3-methylbut-2-enyl diphosphate pocket. A [4Fe-4S] cluster-binding site is contributed by Cys198. The (2E)-4-hydroxy-3-methylbut-2-enyl diphosphate site is built by Ser226, Ser227, Asn228, and Ser270. Ser226, Ser227, Asn228, and Ser270 together coordinate dimethylallyl diphosphate. Residues Ser226, Ser227, Asn228, and Ser270 each contribute to the isopentenyl diphosphate site.

It belongs to the IspH family. Requires [4Fe-4S] cluster as cofactor.

The catalysed reaction is isopentenyl diphosphate + 2 oxidized [2Fe-2S]-[ferredoxin] + H2O = (2E)-4-hydroxy-3-methylbut-2-enyl diphosphate + 2 reduced [2Fe-2S]-[ferredoxin] + 2 H(+). The enzyme catalyses dimethylallyl diphosphate + 2 oxidized [2Fe-2S]-[ferredoxin] + H2O = (2E)-4-hydroxy-3-methylbut-2-enyl diphosphate + 2 reduced [2Fe-2S]-[ferredoxin] + 2 H(+). It functions in the pathway isoprenoid biosynthesis; dimethylallyl diphosphate biosynthesis; dimethylallyl diphosphate from (2E)-4-hydroxy-3-methylbutenyl diphosphate: step 1/1. Its pathway is isoprenoid biosynthesis; isopentenyl diphosphate biosynthesis via DXP pathway; isopentenyl diphosphate from 1-deoxy-D-xylulose 5-phosphate: step 6/6. Catalyzes the conversion of 1-hydroxy-2-methyl-2-(E)-butenyl 4-diphosphate (HMBPP) into a mixture of isopentenyl diphosphate (IPP) and dimethylallyl diphosphate (DMAPP). Acts in the terminal step of the DOXP/MEP pathway for isoprenoid precursor biosynthesis. This chain is 4-hydroxy-3-methylbut-2-enyl diphosphate reductase, found in Pseudomonas putida (strain GB-1).